The following is a 467-amino-acid chain: Putative pentatricopeptide repeat-containing protein At1g10330 (467 aa).

10 PPR repeats span residues 50-84, 85-119, 120-150, 151-181, 182-216, 220-256, 257-287, 288-322, 323-358, and 359-389; these read TKCV…HVQP, NNLT…GFLW, DPFV…ILNP, CVVA…MPVT, DVVS…ERAV, NEAT…EIIL, TTTL…IRDK, KVCA…YVHP, NGIT…KIIP, and TSEH…LPFE. The type E motif; degenerate stretch occupies residues 394-467; sequence VLGALLGACK…RKIPAYSVLT (74 aa).

It belongs to the PPR family. PCMP-E subfamily.

In Arabidopsis thaliana (Mouse-ear cress), this protein is Putative pentatricopeptide repeat-containing protein At1g10330 (PCMP-E71).